The primary structure comprises 171 residues: Crossover junction endodeoxyribonuclease RuvC (171 aa).

Catalysis depends on residues aspartate 7, glutamate 67, and aspartate 139. Mg(2+) is bound by residues aspartate 7, glutamate 67, and aspartate 139.

Belongs to the RuvC family. In terms of assembly, homodimer which binds Holliday junction (HJ) DNA. The HJ becomes 2-fold symmetrical on binding to RuvC with unstacked arms; it has a different conformation from HJ DNA in complex with RuvA. In the full resolvosome a probable DNA-RuvA(4)-RuvB(12)-RuvC(2) complex forms which resolves the HJ. The cofactor is Mg(2+).

The protein localises to the cytoplasm. It catalyses the reaction Endonucleolytic cleavage at a junction such as a reciprocal single-stranded crossover between two homologous DNA duplexes (Holliday junction).. In terms of biological role, the RuvA-RuvB-RuvC complex processes Holliday junction (HJ) DNA during genetic recombination and DNA repair. Endonuclease that resolves HJ intermediates. Cleaves cruciform DNA by making single-stranded nicks across the HJ at symmetrical positions within the homologous arms, yielding a 5'-phosphate and a 3'-hydroxyl group; requires a central core of homology in the junction. The consensus cleavage sequence is 5'-(A/T)TT(C/G)-3'. Cleavage occurs on the 3'-side of the TT dinucleotide at the point of strand exchange. HJ branch migration catalyzed by RuvA-RuvB allows RuvC to scan DNA until it finds its consensus sequence, where it cleaves and resolves the cruciform DNA. This Geotalea uraniireducens (strain Rf4) (Geobacter uraniireducens) protein is Crossover junction endodeoxyribonuclease RuvC.